Here is a 305-residue protein sequence, read N- to C-terminus: MDRERPRKTREPASPGSVLSKRSKLSRKSLALRSLNKFHPYKAPSSVRSLKKAHTLVSNGDFFNGISLNCEFGKDFLREMDTPICTSKVICLPLDVHEIAPGRCLVLSPLGHACNMGFYCEKCTQSGQNSYSQFQGRGGNAKMAAQNSKDDLHSVTLTFYNQVSKVVQNKNFYLSLLSHSLTTIKKSFVQPSLLYSYTVLRALCDDVFPIFKDTENGLCMFALFKTDDLHVSETCLRHLVDNLIHYRVTLDCVKHTYMLKFSPIRAEANGMTIQEVEICEAITGLDFTDEIKQEIISGQELVSEL.

Positions 1–11 (MDRERPRKTRE) are enriched in basic and acidic residues. The interval 1–24 (MDRERPRKTREPASPGSVLSKRSK) is disordered. Residues 104 to 230 (CLVLSPLGHA…FALFKTDDLH (127 aa)) form a CCCH-type zinc finger.

This sequence belongs to the herpesviridae NEC1 protein family. In terms of assembly, forms a heterohexameric complex with NEC2. Interacts with capsid vertex specific component 2/CVC2; this interaction directs the capsid to the host inner nuclear membrane to initiate budding. Phosphorylated at serine residues in the N-terminus. This phosphorylation regulates the localization within the inner nuclear membrane.

It is found in the host nucleus inner membrane. Plays an essential role in virion nuclear egress, the first step of virion release from infected cell. Within the host nucleus, NEC1 interacts with the newly formed capsid through the vertexes and directs it to the inner nuclear membrane by associating with NEC2. Induces the budding of the capsid at the inner nuclear membrane as well as its envelopment into the perinuclear space. There, the NEC1/NEC2 complex promotes the fusion of the enveloped capsid with the outer nuclear membrane and the subsequent release of the viral capsid into the cytoplasm where it will reach the secondary budding sites in the host Golgi or trans-Golgi network. The protein is Nuclear egress protein 1 of Equus caballus (Horse).